A 685-amino-acid chain; its full sequence is Putative pentatricopeptide repeat-containing protein At3g08820 (685 aa).

12 PPR repeats span residues 75–109 (NIFL…GLYL), 110–144 (HGFT…GFNH), 145–175 (DVAA…IPDR), 176–210 (SVVT…GVKP), 211–245 (DSYF…EMQK), 246–276 (NSFV…MVEK), 277–311 (DIVT…NLKP), 312–346 (DQFS…EFLT), 347–381 (NLFM…DIVI), 383–412 (NAAI…GISP), 413–443 (DGST…ISCV), and 449–479 (TVEH…MPMR). The segment at 484–559 (VWGALLSGCR…IPGYSWIELE (76 aa)) is type E motif. The tract at residues 560–590 (GKVHEFLADDKSHPLSDKIYAKLEDLGNEMR) is type E(+) motif. The tract at residues 591–685 (LMGFVPTTEF…NGSCSCNDYW (95 aa)) is type DYW motif.

Belongs to the PPR family. PCMP-H subfamily.

The polypeptide is Putative pentatricopeptide repeat-containing protein At3g08820 (PCMP-H84) (Arabidopsis thaliana (Mouse-ear cress)).